The chain runs to 600 residues: Ligand-dependent nuclear receptor corepressor-like protein (600 aa).

3 disordered regions span residues 1 to 24 (MEKG…QCRS), 102 to 122 (SVIG…GQSN), and 495 to 519 (DGTS…KRGR). Residues 104–122 (IGSSQSTPTEELSSQGQSN) are compositionally biased toward polar residues. One can recognise an HTH psq-type domain in the interval 514–566 (RKKRGRYRQYDHEIMEEAIAMVMSGKMSVSKAQGIYGVPHSTLEYKVKERSGT). The H-T-H motif DNA-binding region spans 542–562 (VSKAQGIYGVPHSTLEYKVKE). The interval 581-600 (GLFNMTDSGTGSCKTSSKPV) is disordered. Residues 583–600 (FNMTDSGTGSCKTSSKPV) show a composition bias toward polar residues.

Its subcellular location is the nucleus. Functionally, may act as transcription activator that binds DNA elements with the sequence 5'-CCCTATCGATCGATCTCTACCT-3'. The protein is Ligand-dependent nuclear receptor corepressor-like protein (LCORL) of Gallus gallus (Chicken).